A 104-amino-acid chain; its full sequence is Large ribosomal subunit protein bL21 (104 aa).

Belongs to the bacterial ribosomal protein bL21 family. In terms of assembly, part of the 50S ribosomal subunit. Contacts protein L20.

Functionally, this protein binds to 23S rRNA in the presence of protein L20. This chain is Large ribosomal subunit protein bL21, found in Leptospira interrogans serogroup Icterohaemorrhagiae serovar copenhageni (strain Fiocruz L1-130).